Here is a 473-residue protein sequence, read N- to C-terminus: Cysteine--tRNA ligase (473 aa).

Zn(2+) is bound at residue Cys-27. Residues 29 to 39 (ITPYDHVHVGH) carry the 'HIGH' region motif. Positions 213, 238, and 242 each coordinate Zn(2+). Residues 271–275 (KMSKS) carry the 'KMSKS' region motif. Lys-274 is an ATP binding site.

It belongs to the class-I aminoacyl-tRNA synthetase family. Zn(2+) serves as cofactor.

The protein localises to the cytoplasm. It carries out the reaction tRNA(Cys) + L-cysteine + ATP = L-cysteinyl-tRNA(Cys) + AMP + diphosphate. This Pyrobaculum calidifontis (strain DSM 21063 / JCM 11548 / VA1) protein is Cysteine--tRNA ligase.